The chain runs to 261 residues: UPF0328 protein ECU02_0020/ECU04_1700 (261 aa).

The segment at 1 to 20 (MSITSIPQPHETNEQHHTEI) is disordered. Residues 11-20 (ETNEQHHTEI) are compositionally biased toward basic and acidic residues.

It belongs to the UPF0328 family.

The sequence is that of UPF0328 protein ECU02_0020/ECU04_1700 from Encephalitozoon cuniculi (strain GB-M1) (Microsporidian parasite).